We begin with the raw amino-acid sequence, 269 residues long: 3-deoxy-manno-octulosonate cytidylyltransferase (269 aa).

This sequence belongs to the KdsB family.

Its subcellular location is the cytoplasm. It carries out the reaction 3-deoxy-alpha-D-manno-oct-2-ulosonate + CTP = CMP-3-deoxy-beta-D-manno-octulosonate + diphosphate. Its pathway is nucleotide-sugar biosynthesis; CMP-3-deoxy-D-manno-octulosonate biosynthesis; CMP-3-deoxy-D-manno-octulosonate from 3-deoxy-D-manno-octulosonate and CTP: step 1/1. It participates in bacterial outer membrane biogenesis; lipopolysaccharide biosynthesis. Its function is as follows. Activates KDO (a required 8-carbon sugar) for incorporation into bacterial lipopolysaccharide in Gram-negative bacteria. The protein is 3-deoxy-manno-octulosonate cytidylyltransferase of Cupriavidus pinatubonensis (strain JMP 134 / LMG 1197) (Cupriavidus necator (strain JMP 134)).